The sequence spans 341 residues: MKRKAKSILFFLLSTVLFAQETDGLAEGSKRAEPGELVLDFAELARDPSSTRLDLTNYVDYVYSGASGIVKPEDMVVDLGINNWSVLLTPSARLQAYVKNSVVAPAVVKSESKRYAGDTILGVRVLFPSYSQSSAMIMPPFKIPFYSGESGNQFLGKGLIDNIKTMKEIKVSVYSLGYEIDLEVLFEDMNGMEYAYSMGTLKFKGWADLIWSNPNYIPNISSRIIKDDVPNYPLASSKMRFKAFRVSKSHSSKEQNFIFYVKDLRVLYDKLSVSIDSDIDSESVFKVYETSGTESLRKLKAHETFKRVLKLREKISMPEGSFQNFVEKIESEKPEESSPKN.

The N-terminal stretch at 1 to 19 (MKRKAKSILFFLLSTVLFA) is a signal peptide.

The flagellum consists of an outer layer composed of repeating units of FlaA around a core that contains several antigenically related polypeptides.

Its subcellular location is the periplasmic flagellum. The protein resides in the periplasm. Its function is as follows. Component of the outer layer of the flagella. The protein is Flagellar filament outer layer protein (flaA) of Borreliella burgdorferi (strain ATCC 35210 / DSM 4680 / CIP 102532 / B31) (Borrelia burgdorferi).